Here is a 220-residue protein sequence, read N- to C-terminus: 7-cyano-7-deazaguanine synthase (220 aa).

7 to 17 lines the ATP pocket; that stretch reads ISGGMDSSTAA. Zn(2+) is bound by residues Cys187, Cys195, Cys198, and Cys201.

The protein belongs to the QueC family. Requires Zn(2+) as cofactor.

The enzyme catalyses 7-carboxy-7-deazaguanine + NH4(+) + ATP = 7-cyano-7-deazaguanine + ADP + phosphate + H2O + H(+). Its pathway is purine metabolism; 7-cyano-7-deazaguanine biosynthesis. In terms of biological role, catalyzes the ATP-dependent conversion of 7-carboxy-7-deazaguanine (CDG) to 7-cyano-7-deazaguanine (preQ(0)). The chain is 7-cyano-7-deazaguanine synthase from Campylobacter hominis (strain ATCC BAA-381 / DSM 21671 / CCUG 45161 / LMG 19568 / NCTC 13146 / CH001A).